Consider the following 322-residue polypeptide: Cytochrome f (322 aa).

The signal sequence occupies residues 1-35 (MQTRNTFSWTWIREEITRSISVSLMIYIITWSSIS). 4 residues coordinate heme: Y38, C58, C61, and H62. The helical transmembrane segment at 288–308 (VQGLLFFLGSVVLAQIFLVLK) threads the bilayer.

This sequence belongs to the cytochrome f family. In terms of assembly, the 4 large subunits of the cytochrome b6-f complex are cytochrome b6, subunit IV (17 kDa polypeptide, petD), cytochrome f and the Rieske protein, while the 4 small subunits are PetG, PetL, PetM and PetN. The complex functions as a dimer. Requires heme as cofactor.

It localises to the plastid. The protein resides in the chloroplast thylakoid membrane. Functionally, component of the cytochrome b6-f complex, which mediates electron transfer between photosystem II (PSII) and photosystem I (PSI), cyclic electron flow around PSI, and state transitions. This chain is Cytochrome f, found in Aethionema grandiflorum (Persian stone-cress).